The sequence spans 200 residues: Recombination protein RecR (200 aa).

Residues 57-72 form a C4-type zinc finger; it reads CQHCRTFTENSLCDIC. The 96-residue stretch at 81-176 folds into the Toprim domain; the sequence is GQLCIVETPA…NITRIAHGVP (96 aa).

Belongs to the RecR family.

May play a role in DNA repair. It seems to be involved in an RecBC-independent recombinational process of DNA repair. It may act with RecF and RecO. In Tolumonas auensis (strain DSM 9187 / NBRC 110442 / TA 4), this protein is Recombination protein RecR.